We begin with the raw amino-acid sequence, 384 residues long: MALSPEPSSRFLVPATMGSAMPELPGAPNASLNSSLASPTEPNSLEDLVATGTIGVVLSAMGVVGMAGNVYTLTVMCRFLHTSASMYVYVINLALADLLYLLSIPFIVATYVTKRWHFGDVGCRVLFSLDFLTMHASIFTLTLMSRERYAAVVRPLDTVQRSKGYRKVLALGTWLLALLLALPMMLAIRLVRRGHKSLCLPAWGQRTHRAYLTLLFGTSIVGPGVVIGLLYVRLARAYWLSQRSSFTQTRRLPNPRVLYLILGIVLLFWACFLPFWLWQLLAQYRGAPPLAPRSARIVNYLTTCLTYGNSCVNPFLYTLLTKNYRDYRQRSLHSRGTSGPVGVRSFPQGHTRCQLGSGRSVTSSSQQATETIALSQAVPGSLCV.

At 1–54 the chain is on the extracellular side; sequence MALSPEPSSRFLVPATMGSAMPELPGAPNASLNSSLASPTEPNSLEDLVATGTI. N-linked (GlcNAc...) asparagine glycosylation is found at asparagine 29 and asparagine 33. A helical transmembrane segment spans residues 55 to 77; that stretch reads GVVLSAMGVVGMAGNVYTLTVMC. The Cytoplasmic portion of the chain corresponds to 78–87; sequence RFLHTSASMY. A helical transmembrane segment spans residues 88-113; that stretch reads VYVINLALADLLYLLSIPFIVATYVT. Residues 114–124 lie on the Extracellular side of the membrane; sequence KRWHFGDVGCR. An intrachain disulfide couples cysteine 123 to cysteine 199. The chain crosses the membrane as a helical span at residues 125–146; the sequence is VLFSLDFLTMHASIFTLTLMSR. Topologically, residues 147 to 167 are cytoplasmic; it reads ERYAAVVRPLDTVQRSKGYRK. The helical transmembrane segment at 168–186 threads the bilayer; that stretch reads VLALGTWLLALLLALPMML. Over 187 to 209 the chain is Extracellular; that stretch reads AIRLVRRGHKSLCLPAWGQRTHR. A helical membrane pass occupies residues 210–232; the sequence is AYLTLLFGTSIVGPGVVIGLLYV. Over 233–259 the chain is Cytoplasmic; the sequence is RLARAYWLSQRSSFTQTRRLPNPRVLY. A helical membrane pass occupies residues 260 to 285; sequence LILGIVLLFWACFLPFWLWQLLAQYR. Over 286–299 the chain is Extracellular; sequence GAPPLAPRSARIVN. The chain crosses the membrane as a helical span at residues 300 to 320; the sequence is YLTTCLTYGNSCVNPFLYTLL. Over 321–384 the chain is Cytoplasmic; it reads TKNYRDYRQR…SQAVPGSLCV (64 aa).

The protein belongs to the G-protein coupled receptor 1 family. As to expression, expressed in neural tissue, including sensory epithelia.

It localises to the cell membrane. Its function is as follows. High affinity receptor for urotensin-2 and urotensin-2B. The activity of this receptor is mediated by a G-protein that activate a phosphatidylinositol-calcium second messenger system. This is Urotensin-2 receptor (UTS2R) from Bos taurus (Bovine).